Reading from the N-terminus, the 123-residue chain is Peptide methionine sulfoxide reductase MsrA (123 aa).

The active site involves C8.

It belongs to the MsrA Met sulfoxide reductase family.

It catalyses the reaction L-methionyl-[protein] + [thioredoxin]-disulfide + H2O = L-methionyl-(S)-S-oxide-[protein] + [thioredoxin]-dithiol. The enzyme catalyses [thioredoxin]-disulfide + L-methionine + H2O = L-methionine (S)-S-oxide + [thioredoxin]-dithiol. Its function is as follows. Has an important function as a repair enzyme for proteins that have been inactivated by oxidation. Catalyzes the reversible oxidation-reduction of methionine sulfoxide in proteins to methionine. The protein is Peptide methionine sulfoxide reductase MsrA of Thermoactinomyces vulgaris.